The following is a 119-amino-acid chain: Large ribosomal subunit protein bL20 (119 aa).

This sequence belongs to the bacterial ribosomal protein bL20 family.

In terms of biological role, binds directly to 23S ribosomal RNA and is necessary for the in vitro assembly process of the 50S ribosomal subunit. It is not involved in the protein synthesizing functions of that subunit. The sequence is that of Large ribosomal subunit protein bL20 from Geobacillus sp. (strain WCH70).